We begin with the raw amino-acid sequence, 251 residues long: 3-deoxy-manno-octulosonate cytidylyltransferase (251 aa).

Belongs to the KdsB family.

It localises to the cytoplasm. It catalyses the reaction 3-deoxy-alpha-D-manno-oct-2-ulosonate + CTP = CMP-3-deoxy-beta-D-manno-octulosonate + diphosphate. It participates in nucleotide-sugar biosynthesis; CMP-3-deoxy-D-manno-octulosonate biosynthesis; CMP-3-deoxy-D-manno-octulosonate from 3-deoxy-D-manno-octulosonate and CTP: step 1/1. Its pathway is bacterial outer membrane biogenesis; lipopolysaccharide biosynthesis. Activates KDO (a required 8-carbon sugar) for incorporation into bacterial lipopolysaccharide in Gram-negative bacteria. The chain is 3-deoxy-manno-octulosonate cytidylyltransferase from Brucella ovis (strain ATCC 25840 / 63/290 / NCTC 10512).